Reading from the N-terminus, the 238-residue chain is Adenylate dimethylallyltransferase (238 aa).

Belongs to the isopentenyl transferase family.

It catalyses the reaction dimethylallyl diphosphate + AMP = N(6)-(dimethylallyl)adenosine 5'-phosphate + diphosphate. In terms of biological role, transfers dimethylallyl groups to AMP as part of the biosynthesis of cytokinin phytohormones. This Ralstonia nicotianae (strain ATCC BAA-1114 / GMI1000) (Ralstonia solanacearum) protein is Adenylate dimethylallyltransferase (tzs).